A 465-amino-acid chain; its full sequence is Mitochondrial F-box protein MFB1 (465 aa).

The region spanning 14–60 is the F-box domain; sequence ERSLTNLPLNLLFRILSHLDMNDLQNIGKTCTLLRMLANENIVYRNA. A disordered region spans residues 253–279; it reads FTKSRDPDYKEMTPTSTESSDSITRLR. Residues 254 to 263 are compositionally biased toward basic and acidic residues; the sequence is TKSRDPDYKE. Over residues 265-275 the composition is skewed to polar residues; sequence TPTSTESSDSI.

It localises to the mitochondrion. This chain is Mitochondrial F-box protein MFB1 (MFB1), found in Saccharomyces cerevisiae (strain ATCC 204508 / S288c) (Baker's yeast).